The following is a 331-amino-acid chain: Major outer membrane protein P.IB (331 aa).

The N-terminal stretch at 1-19 (MKKSLIALTLAALPVAAMA) is a signal peptide.

This sequence belongs to the Gram-negative porin family. As to quaternary structure, homotrimer.

The protein resides in the cell outer membrane. Serves as a slightly cation selective porin. This is Major outer membrane protein P.IB (porB) from Neisseria meningitidis serogroup B.